A 132-amino-acid chain; its full sequence is Vacuolar protein sorting-associated protein 55 homolog (132 aa).

4 helical membrane-spanning segments follow: residues 7–27, 32–52, 68–88, and 98–118; these read VAALAFAGVVGLTFLVLGCAL, TWTPMFVITFYVLSPVPLLIA, LALFITTGIVISAFALPIVLA, and CFLVNTGSVIMFGTIIAYFYL.

It belongs to the OB-RGRP/VPS55 family.

It is found in the endosome membrane. In terms of biological role, involved in endosomal protein transport. This is Vacuolar protein sorting-associated protein 55 homolog from Caenorhabditis elegans.